The sequence spans 389 residues: Globin-like protein 6 (389 aa).

The segment covering 1–15 (MGNQSTKSTHGTTRV) has biased composition (polar residues). Disordered stretches follow at residues 1–38 (MGNQ…RSAS), 96–123 (RTSK…SVDS), and 143–185 (TVSS…SSNP). Over residues 16-25 (SHSKSAHHNS) the composition is skewed to basic residues. Positions 196 to 347 (HLTQPQILFV…VTEQLKEGFQ (152 aa)) constitute a Globin domain. Residues His-254 and His-286 each contribute to the heme b site. A disordered region spans residues 367–389 (SSFEISTKTKQSDMKRFHTLDNM). Residues 376–389 (KQSDMKRFHTLDNM) show a composition bias toward basic and acidic residues.

The protein belongs to the globin family. In terms of tissue distribution, expressed in the head and tail neurons and nerve cord.

Its function is as follows. May play a role as physiological sensor for oxygen via redox signaling and/or electron transport. This is Globin-like protein 6 from Caenorhabditis elegans.